Consider the following 70-residue polypeptide: MGKVTGIAGRFGARYGSSVRKKWKEIMEKRYQDHQCPVCKTTGKVVRIASGVWYCKKCGAKWAGLAYTPY.

Cysteine 36, cysteine 39, cysteine 55, and cysteine 58 together coordinate Zn(2+). Residues 36 to 58 form a C4-type zinc finger; it reads CPVCKTTGKVVRIASGVWYCKKC.

Belongs to the eukaryotic ribosomal protein eL43 family. Putative zinc-binding subfamily. Part of the 50S ribosomal subunit. The cofactor is Zn(2+).

Its function is as follows. Binds to the 23S rRNA. The protein is Large ribosomal subunit protein eL43 of Sulfurisphaera tokodaii (strain DSM 16993 / JCM 10545 / NBRC 100140 / 7) (Sulfolobus tokodaii).